We begin with the raw amino-acid sequence, 571 residues long: Sulfite reductase [NADPH] hemoprotein beta-component (571 aa).

[4Fe-4S] cluster contacts are provided by cysteine 436, cysteine 442, cysteine 481, and cysteine 485. Cysteine 485 lines the siroheme pocket.

The protein belongs to the nitrite and sulfite reductase 4Fe-4S domain family. In terms of assembly, alpha(8)-beta(8). The alpha component is a flavoprotein, the beta component is a hemoprotein. It depends on siroheme as a cofactor. [4Fe-4S] cluster serves as cofactor.

The enzyme catalyses hydrogen sulfide + 3 NADP(+) + 3 H2O = sulfite + 3 NADPH + 4 H(+). It participates in sulfur metabolism; hydrogen sulfide biosynthesis; hydrogen sulfide from sulfite (NADPH route): step 1/1. In terms of biological role, component of the sulfite reductase complex that catalyzes the 6-electron reduction of sulfite to sulfide. This is one of several activities required for the biosynthesis of L-cysteine from sulfate. In Bacillus velezensis (strain DSM 23117 / BGSC 10A6 / LMG 26770 / FZB42) (Bacillus amyloliquefaciens subsp. plantarum), this protein is Sulfite reductase [NADPH] hemoprotein beta-component.